A 422-amino-acid chain; its full sequence is Aminopentol aminotransferase (422 aa).

At Lys-258 the chain carries N6-(pyridoxal phosphate)lysine.

Belongs to the class-III pyridoxal-phosphate-dependent aminotransferase family. Pyridoxal 5'-phosphate is required as a cofactor.

It is found in the cytoplasm. The enzyme catalyses (2S,3S,5R,10R,12S,14S,15R,16R)-2-amino-12,16-dimethylicosane-3,5,10,14,15-pentol + pyruvate = (3S,5R,10R,12S,14S,15R,16R)-3,5,10,14,15-pentahydroxy-12,16-dimethylicosan-2-one + L-alanine. In terms of biological role, involved in degradation of fumonisin B1. Catalyzes the deamination of aminopentol (HFB1) to 2-keto-HFB1. Pyruvate is the preferred cosubstrate, but it can also use several other alpha-keto acids as amino group acceptors. The sequence is that of Aminopentol aminotransferase (fumI) from Sphingopyxis macrogoltabida (Sphingomonas macrogoltabidus).